Reading from the N-terminus, the 347-residue chain is tRNA N6-adenosine threonylcarbamoyltransferase (347 aa).

H115 and H119 together coordinate Fe cation. Substrate-binding positions include 137-141 (LASGG), D170, G183, and N281. Residue D309 participates in Fe cation binding.

The protein belongs to the KAE1 / TsaD family. Fe(2+) is required as a cofactor.

Its subcellular location is the cytoplasm. The catalysed reaction is L-threonylcarbamoyladenylate + adenosine(37) in tRNA = N(6)-L-threonylcarbamoyladenosine(37) in tRNA + AMP + H(+). Its function is as follows. Required for the formation of a threonylcarbamoyl group on adenosine at position 37 (t(6)A37) in tRNAs that read codons beginning with adenine. Is involved in the transfer of the threonylcarbamoyl moiety of threonylcarbamoyl-AMP (TC-AMP) to the N6 group of A37, together with TsaE and TsaB. TsaD likely plays a direct catalytic role in this reaction. In Methylorubrum extorquens (strain CM4 / NCIMB 13688) (Methylobacterium extorquens), this protein is tRNA N6-adenosine threonylcarbamoyltransferase.